We begin with the raw amino-acid sequence, 331 residues long: Sulfate/thiosulfate import ATP-binding protein CysA (331 aa).

Positions 2-232 (ITVTNARKNY…PANEFVMSFL (231 aa)) constitute an ABC transporter domain. 34–41 (GPSGSGKS) lines the ATP pocket.

Belongs to the ABC transporter superfamily. Sulfate/tungstate importer (TC 3.A.1.6) family. As to quaternary structure, the complex is composed of two ATP-binding proteins (CysA), two transmembrane proteins (CysT and CysW) and a solute-binding protein (CysP).

It is found in the cell membrane. It catalyses the reaction sulfate(out) + ATP + H2O = sulfate(in) + ADP + phosphate + H(+). The catalysed reaction is thiosulfate(out) + ATP + H2O = thiosulfate(in) + ADP + phosphate + H(+). Its function is as follows. Part of the ABC transporter complex CysAWTP involved in sulfate/thiosulfate import. Responsible for energy coupling to the transport system. The polypeptide is Sulfate/thiosulfate import ATP-binding protein CysA (Nocardia farcinica (strain IFM 10152)).